Reading from the N-terminus, the 137-residue chain is Large ribosomal subunit protein uL16 (137 aa).

Residues 1-16 show a composition bias toward basic residues; that stretch reads MLQPKRTKFRKVHTGR. The segment at 1–22 is disordered; sequence MLQPKRTKFRKVHTGRNRGLAQ.

This sequence belongs to the universal ribosomal protein uL16 family. As to quaternary structure, part of the 50S ribosomal subunit.

In terms of biological role, binds 23S rRNA and is also seen to make contacts with the A and possibly P site tRNAs. This is Large ribosomal subunit protein uL16 from Idiomarina loihiensis (strain ATCC BAA-735 / DSM 15497 / L2-TR).